The chain runs to 101 residues: Co-chaperonin GroES 1 (101 aa).

This sequence belongs to the GroES chaperonin family. As to quaternary structure, heptamer of 7 subunits arranged in a ring. Interacts with the chaperonin GroEL.

The protein localises to the cytoplasm. Functionally, together with the chaperonin GroEL, plays an essential role in assisting protein folding. The GroEL-GroES system forms a nano-cage that allows encapsulation of the non-native substrate proteins and provides a physical environment optimized to promote and accelerate protein folding. GroES binds to the apical surface of the GroEL ring, thereby capping the opening of the GroEL channel. This Rhodopirellula baltica (strain DSM 10527 / NCIMB 13988 / SH1) protein is Co-chaperonin GroES 1.